The primary structure comprises 359 residues: Biotin synthase (359 aa).

The 230-residue stretch at His47–Arg276 folds into the Radical SAM core domain. 3 residues coordinate [4Fe-4S] cluster: Cys65, Cys69, and Cys72. [2Fe-2S] cluster contacts are provided by Cys109, Cys141, Cys201, and Arg271. The segment at Glu320–Gly359 is disordered.

The protein belongs to the radical SAM superfamily. Biotin synthase family. In terms of assembly, homodimer. It depends on [4Fe-4S] cluster as a cofactor. The cofactor is [2Fe-2S] cluster.

It catalyses the reaction (4R,5S)-dethiobiotin + (sulfur carrier)-SH + 2 reduced [2Fe-2S]-[ferredoxin] + 2 S-adenosyl-L-methionine = (sulfur carrier)-H + biotin + 2 5'-deoxyadenosine + 2 L-methionine + 2 oxidized [2Fe-2S]-[ferredoxin]. Its pathway is cofactor biosynthesis; biotin biosynthesis; biotin from 7,8-diaminononanoate: step 2/2. In terms of biological role, catalyzes the conversion of dethiobiotin (DTB) to biotin by the insertion of a sulfur atom into dethiobiotin via a radical-based mechanism. This Salinibacter ruber (strain DSM 13855 / M31) protein is Biotin synthase.